The primary structure comprises 368 residues: Abasic site processing protein YMR114C (368 aa).

Cysteine 2 functions as the Nucleophile in the catalytic mechanism. The residue at position 2 (cysteine 2) is a Thiazolidine linkage to a ring-opened DNA abasic site. The disordered stretch occupies residues valine 25–proline 48. Positions histidine 37 to aspartate 46 are enriched in basic and acidic residues. Glutamate 132 is a catalytic residue. Positions leucine 270–lysine 368 are disordered. Basic and acidic residues-rich tracts occupy residues arginine 281–asparagine 296, asparagine 304–glutamate 313, and isoleucine 326–asparagine 349. At serine 338 the chain carries Phosphoserine.

This sequence belongs to the SOS response-associated peptidase family.

It is found in the chromosome. Its activity is regulated as follows. Formation and reversal of DNA-protein cross-link depends on DNA context. Catalyzes formation of the thiazolidine linkage in presence of abasic sites in single-stranded DNA. Mediates the reversal of the thiazolidine cross-link in presence of double stranded DNA. Its function is as follows. Sensor of abasic sites in single-stranded DNA (ssDNA) required to preserve genome integrity by promoting error-free repair of abasic sites. Recognizes and binds abasic sites in ssDNA at replication forks and chemically modifies the lesion by forming a covalent cross-link with DNA: forms a stable thiazolidine linkage between a ring-opened abasic site and the alpha-amino and sulfhydryl substituents of its N-terminal catalytic cysteine residue. The DNA-protein cross-link is then reversed: able to catalyze the reversal of the thiazolidine cross-link and cycle between a cross-link and a non-cross-linked state depending on DNA context: mediates self-reversal of the thiazolidine cross-link in double stranded DNA. Acts as a protease: mediates autocatalytic processing of its N-terminal methionine in order to expose the catalytic cysteine. This Saccharomyces cerevisiae (strain ATCC 204508 / S288c) (Baker's yeast) protein is Abasic site processing protein YMR114C.